Here is a 131-residue protein sequence, read N- to C-terminus: Cyclin-dependent kinase 4 inhibitor B (131 aa).

4 ANK repeats span residues 6–35 (GGDADLANAAARGQVEAVRQLLEAGVDPNR), 39–67 (FGRRPIQVMMMGSARVAELLLLHGADPNC), 72–101 (TLTRPVHDAAREGFLDTLVALHRAGGRLDV), and 105–131 (WGRLPVDLAEERGHRDVARYLRATAGD).

This sequence belongs to the CDKN2 cyclin-dependent kinase inhibitor family. As to quaternary structure, heterodimer of CDKN2B with CDK4 or CDK6.

In terms of biological role, interacts strongly with CDK4 and CDK6. Potent inhibitor. Potential effector of TGF-beta induced cell cycle arrest. The chain is Cyclin-dependent kinase 4 inhibitor B (CDKN2B) from Bos taurus (Bovine).